A 344-amino-acid chain; its full sequence is Methylthioribose-1-phosphate isomerase (344 aa).

Substrate is bound by residues 46 to 48 (RGA), Arg89, and Gln196. The active-site Proton donor is the Asp237. 247–248 (NK) provides a ligand contact to substrate.

The protein belongs to the eIF-2B alpha/beta/delta subunits family. MtnA subfamily.

The enzyme catalyses 5-(methylsulfanyl)-alpha-D-ribose 1-phosphate = 5-(methylsulfanyl)-D-ribulose 1-phosphate. It functions in the pathway amino-acid biosynthesis; L-methionine biosynthesis via salvage pathway; L-methionine from S-methyl-5-thio-alpha-D-ribose 1-phosphate: step 1/6. In terms of biological role, catalyzes the interconversion of methylthioribose-1-phosphate (MTR-1-P) into methylthioribulose-1-phosphate (MTRu-1-P). The protein is Methylthioribose-1-phosphate isomerase of Syntrophotalea carbinolica (strain DSM 2380 / NBRC 103641 / GraBd1) (Pelobacter carbinolicus).